Reading from the N-terminus, the 699-residue chain is tRNA(Met) cytidine acetyltransferase TmcA (699 aa).

Residues glutamine 178, 200 to 209 (GRGKSTLAGM), and arginine 322 contribute to the ATP site. Positions 408-547 (MHIASAQVAG…SGCYSAMAIL (140 aa)) constitute an N-acetyltransferase domain. Acetyl-CoA contacts are provided by residues 475–477 (IAV) and 482–488 (RRQGIGR).

Belongs to the RNA cytidine acetyltransferase family. TmcA subfamily.

The protein localises to the cytoplasm. The enzyme catalyses cytidine(34) in elongator tRNA(Met) + acetyl-CoA + ATP + H2O = N(4)-acetylcytidine(34) in elongator tRNA(Met) + ADP + phosphate + CoA + H(+). Catalyzes the formation of N(4)-acetylcytidine (ac(4)C) at the wobble position of tRNA(Met), by using acetyl-CoA as an acetyl donor and ATP (or GTP). The sequence is that of tRNA(Met) cytidine acetyltransferase TmcA from Pectobacterium atrosepticum (strain SCRI 1043 / ATCC BAA-672) (Erwinia carotovora subsp. atroseptica).